Reading from the N-terminus, the 645-residue chain is Acetyl-coenzyme A synthetase (645 aa).

CoA contacts are provided by residues 190–193 (RGSK), Thr-308, and Asn-332. ATP contacts are provided by residues 384 to 386 (GEP), 408 to 413 (DTWWQT), Asp-497, and Arg-512. Ser-520 provides a ligand contact to CoA. Residue Arg-523 participates in ATP binding. Val-534, His-536, and Val-539 together coordinate Mg(2+). Position 581 (Arg-581) interacts with CoA. N6-acetyllysine is present on Lys-606.

It belongs to the ATP-dependent AMP-binding enzyme family. Mg(2+) serves as cofactor. Post-translationally, acetylated. Deacetylation by the SIR2-homolog deacetylase activates the enzyme.

It carries out the reaction acetate + ATP + CoA = acetyl-CoA + AMP + diphosphate. Functionally, catalyzes the conversion of acetate into acetyl-CoA (AcCoA), an essential intermediate at the junction of anabolic and catabolic pathways. AcsA undergoes a two-step reaction. In the first half reaction, AcsA combines acetate with ATP to form acetyl-adenylate (AcAMP) intermediate. In the second half reaction, it can then transfer the acetyl group from AcAMP to the sulfhydryl group of CoA, forming the product AcCoA. The chain is Acetyl-coenzyme A synthetase from Bdellovibrio bacteriovorus (strain ATCC 15356 / DSM 50701 / NCIMB 9529 / HD100).